The primary structure comprises 222 residues: Probable RNA 2'-phosphotransferase (222 aa).

This sequence belongs to the KptA/TPT1 family.

Removes the 2'-phosphate from RNA via an intermediate in which the phosphate is ADP-ribosylated by NAD followed by a presumed transesterification to release the RNA and generate ADP-ribose 1''-2''-cyclic phosphate (APPR&gt;P). May function as an ADP-ribosylase. The chain is Probable RNA 2'-phosphotransferase from Haloarcula marismortui (strain ATCC 43049 / DSM 3752 / JCM 8966 / VKM B-1809) (Halobacterium marismortui).